Reading from the N-terminus, the 298-residue chain is Urease accessory protein UreD (298 aa).

This sequence belongs to the UreD family. UreD, UreF and UreG form a complex that acts as a GTP-hydrolysis-dependent molecular chaperone, activating the urease apoprotein by helping to assemble the nickel containing metallocenter of UreC. The UreE protein probably delivers the nickel.

The protein resides in the cytoplasm. Required for maturation of urease via the functional incorporation of the urease nickel metallocenter. This is Urease accessory protein UreD from Marinobacter nauticus (strain ATCC 700491 / DSM 11845 / VT8) (Marinobacter aquaeolei).